Consider the following 200-residue polypeptide: MGNGLSDQTSILSNLPSFQSFHIVILGLDCAGKTTVLYRLQFNEFVNTVPTKGFNTEKIKVTLGNSKTVTFHFWDVGGQEKLRPLWKSYTRCTDGIVFVVDSVDVERMEEAKTELHKITRISENQGVPVLIVANKQDLRNSLSLSEIEKLLAMGELSSSTPWHLQPTCAIIGDGLKEGLEKLHDMIIKRRKMLRQQKKKR.

Gly2 carries N-myristoyl glycine lipidation. GTP-binding positions include 27–34 (GLDCAGKT), 75–79 (DVGGQ), and 134–137 (NKQD).

The protein belongs to the small GTPase superfamily. Arf family. Interacts with CYTH2. Interacts with KPNA2; the interaction is direct. Does not interact with ARL4A. Post-translationally, myristoylated.

The protein localises to the cell membrane. The protein resides in the cytoplasm. Its subcellular location is the nucleus. It localises to the nucleolus. Small GTP-binding protein which cycles between an inactive GDP-bound and an active GTP-bound form, and the rate of cycling is regulated by guanine nucleotide exchange factors (GEF) and GTPase-activating proteins (GAP). GTP-binding protein that does not act as an allosteric activator of the cholera toxin catalytic subunit. Recruits CYTH1, CYTH2, CYTH3 and CYTH4 to the plasma membrane in GDP-bound form. This is ADP-ribosylation factor-like protein 4A (ARL4A) from Homo sapiens (Human).